A 120-amino-acid polypeptide reads, in one-letter code: Large ribosomal subunit protein bL19 (120 aa).

This sequence belongs to the bacterial ribosomal protein bL19 family.

Functionally, this protein is located at the 30S-50S ribosomal subunit interface and may play a role in the structure and function of the aminoacyl-tRNA binding site. This is Large ribosomal subunit protein bL19 from Trichormus variabilis (strain ATCC 29413 / PCC 7937) (Anabaena variabilis).